The primary structure comprises 488 residues: 3-octaprenyl-4-hydroxybenzoate carboxy-lyase (488 aa).

N172 lines the Mn(2+) pocket. Prenylated FMN contacts are provided by residues 175–177, 189–191, and 194–195; these read IYR, RWL, and RG. E238 is a Mn(2+) binding site. D287 (proton donor) is an active-site residue.

It belongs to the UbiD family. Homohexamer. Prenylated FMN serves as cofactor. Mn(2+) is required as a cofactor.

It is found in the cell membrane. The enzyme catalyses a 4-hydroxy-3-(all-trans-polyprenyl)benzoate + H(+) = a 2-(all-trans-polyprenyl)phenol + CO2. It participates in cofactor biosynthesis; ubiquinone biosynthesis. Its function is as follows. Catalyzes the decarboxylation of 3-octaprenyl-4-hydroxy benzoate to 2-octaprenylphenol, an intermediate step in ubiquinone biosynthesis. The polypeptide is 3-octaprenyl-4-hydroxybenzoate carboxy-lyase (Pseudomonas paraeruginosa (strain DSM 24068 / PA7) (Pseudomonas aeruginosa (strain PA7))).